A 371-amino-acid chain; its full sequence is tRNA N6-adenosine threonylcarbamoyltransferase (371 aa).

Fe cation-binding residues include H110 and H114. Residues 132–136, D165, G178, D182, and N289 each bind substrate; that span reads LVSGG. D317 is a binding site for Fe cation.

It belongs to the KAE1 / TsaD family. It depends on Fe(2+) as a cofactor.

The protein localises to the cytoplasm. It catalyses the reaction L-threonylcarbamoyladenylate + adenosine(37) in tRNA = N(6)-L-threonylcarbamoyladenosine(37) in tRNA + AMP + H(+). Required for the formation of a threonylcarbamoyl group on adenosine at position 37 (t(6)A37) in tRNAs that read codons beginning with adenine. Is involved in the transfer of the threonylcarbamoyl moiety of threonylcarbamoyl-AMP (TC-AMP) to the N6 group of A37, together with TsaE and TsaB. TsaD likely plays a direct catalytic role in this reaction. The chain is tRNA N6-adenosine threonylcarbamoyltransferase from Solidesulfovibrio magneticus (strain ATCC 700980 / DSM 13731 / RS-1) (Desulfovibrio magneticus).